A 251-amino-acid polypeptide reads, in one-letter code: Ribosome maturation factor RimP (251 aa).

Positions 198–251 (NLGLEPPAAPHAKISEKTTKNTKPKKKPAPTNTKKHRLAAERARRGEIEPDEGD) are disordered. Positions 217–234 (KNTKPKKKPAPTNTKKHR) are enriched in basic residues. Residues 235-245 (LAAERARRGEI) are compositionally biased toward basic and acidic residues.

This sequence belongs to the RimP family.

It localises to the cytoplasm. Required for maturation of 30S ribosomal subunits. The protein is Ribosome maturation factor RimP of Bradyrhizobium diazoefficiens (strain JCM 10833 / BCRC 13528 / IAM 13628 / NBRC 14792 / USDA 110).